Consider the following 37-residue polypeptide: Photosystem I reaction center subunit VIII (37 aa).

Residues 10–30 (IFVPLVGLVFPAIAMASLSLY) form a helical membrane-spanning segment.

Belongs to the PsaI family.

The protein localises to the plastid. It is found in the chloroplast thylakoid membrane. In terms of biological role, may help in the organization of the PsaL subunit. The polypeptide is Photosystem I reaction center subunit VIII (Gossypium hirsutum (Upland cotton)).